A 500-amino-acid chain; its full sequence is L-arabinose isomerase (500 aa).

Mn(2+)-binding residues include Glu-306, Glu-333, His-350, and His-450.

Belongs to the arabinose isomerase family. As to quaternary structure, homohexamer. It depends on Mn(2+) as a cofactor.

It carries out the reaction beta-L-arabinopyranose = L-ribulose. The protein operates within carbohydrate degradation; L-arabinose degradation via L-ribulose; D-xylulose 5-phosphate from L-arabinose (bacterial route): step 1/3. In terms of biological role, catalyzes the conversion of L-arabinose to L-ribulose. This chain is L-arabinose isomerase, found in Yersinia pseudotuberculosis serotype O:3 (strain YPIII).